The primary structure comprises 3432 residues: Genome polyprotein (3432 aa).

The segment at 2–15 (TKKPGGPGKNRAIN) is interaction with host EXOC1. Over 2 to 109 (TKKPGGPGKN…RKQNKRGGNE (108 aa)) the chain is Cytoplasmic. A hydrophobic; homodimerization of capsid protein C region spans residues 37–72 (LLDGRGPVRFVLALITFFKFTALAPTKALLGRWKAV). The propeptide at 106–127 (GGNEGSIMWLASLAVVIACAGA) is ER anchor for the capsid protein C, removed in mature form by serine protease NS3. The chain crosses the membrane as a helical span at residues 110 to 130 (GSIMWLASLAVVIACAGAMKL). Topologically, residues 131-253 (SNFQGKLLMT…ATRYLMKTEN (123 aa)) are extracellular. An N-linked (GlcNAc...) asparagine; by host glycan is attached at N142. A helical transmembrane segment spans residues 254–274 (WIIRNPGYAFLAAVLGWMLGS). Over 275–279 (NNGQR) the chain is Cytoplasmic. A helical transmembrane segment spans residues 280-294 (VVFTILLLLVAPAYS). Residues 295–746 (FNCLGMGNRD…QVFGGAFRTL (452 aa)) are Extracellular-facing. Disulfide bonds link C297-C324, C354-C410, C354-C415, C368-C399, C386-C410, and C386-C415. Residues 392 to 405 (DRGWGNGCGLFGKG) form a fusion peptide region. N-linked (GlcNAc...) asparagine; by host glycosylation occurs at N448. Disulfide bonds link C484-C581 and C598-C629. Residues 747–767 (FGGMSWITQGLMGALLLWMGV) form a helical membrane-spanning segment. Residues 768–773 (NARDRS) are Cytoplasmic-facing. Residues 774–794 (IALAFLATGGVLVFLATNVHA) form a helical membrane-spanning segment. Residues 795–1219 (DTGCAIDITR…AFAEANSGGD (425 aa)) are Extracellular-facing. Intrachain disulfides connect C798–C809, C849–C937, C973–C1017, C1074–C1123, C1085–C1106, and C1107–C1110. 2 N-linked (GlcNAc...) asparagine; by host glycosylation sites follow: N924 and N1001. A helical membrane pass occupies residues 1220 to 1240 (VLHLALIAVFKIQPAFLVMNM). Residues 1241 to 1250 (LSTRWTNQEN) lie on the Cytoplasmic side of the membrane. A helical transmembrane segment spans residues 1251 to 1271 (VILVLGAAFFQLASVDLQIGV). Residue H1272 is a topological domain, lumenal. The chain crosses the membrane as a helical span at residues 1273 to 1293 (GILNAAAIAWMIVRAITFPTT). Over 1294–1309 (SSVTMPVLALLTPGMR) the chain is Cytoplasmic. The helical transmembrane segment at 1310–1330 (ALYLDTYRIILLVIGICSLLH) threads the bilayer. Residues 1331-1341 (ERKKTMAKKKG) lie on the Lumenal side of the membrane. Residues 1342-1362 (AVLLGLALTSTGWFSPTTIAA) traverse the membrane as a helical segment. Topologically, residues 1363-1374 (GLMVCNPNKKRG) are cytoplasmic. Interaction with human SPCS1 regions lie at residues 1374–1423 (GWPA…GKAT) and 1458–1505 (FHLI…TKRG). The chain crosses the membrane as a helical span at residues 1375 to 1395 (WPATEFLSAVGLMFAIVGGLA). Residues 1396-1398 (ELD) lie on the Lumenal side of the membrane. Residues 1399 to 1419 (IESMSIPFMLAGLMAVSYVVS) traverse the membrane as a helical segment. At 1420–1476 (GKATDMWLERAADISWEMDAAITGSSRRLDVKLDDDGDFHLIDDPGVPWKVWVLRMS) the chain is on the cytoplasmic side. The interacts with and activates NS3 protease stretch occupies residues 1427 to 1466 (LERAADISWEMDAAITGSSRRLDVKLDDDGDFHLIDDPGV). The helical intramembrane region spans 1477 to 1497 (CIGLAALTPWAIVPAAFGYWL). The Cytoplasmic portion of the chain corresponds to 1498-2173 (TLKTTKRGGV…RMALEELPDA (676 aa)). A Peptidase S7 domain is found at 1505 to 1682 (GGVFWDTPSP…DRQEEPVPEA (178 aa)). Active-site charge relay system; for serine protease NS3 activity residues include H1555, D1579, and S1639. The 157-residue stretch at 1685–1841 (PNMLRKRQMT…DSNAPIHDLQ (157 aa)) folds into the Helicase ATP-binding domain. The tract at residues 1689 to 1692 (RKRQ) is important for RNA-binding. 1698–1705 (LHPGSGKT) provides a ligand contact to ATP. The short motif at 1789 to 1792 (DEAH) is the DEAH box element. The 166-residue stretch at 1852–2017 (GYEWITEYAG…GLVAQLYGPE (166 aa)) folds into the Helicase C-terminal domain. K1893 is modified (N6-acetyllysine; by host). Residues 1950 to 1972 (NPSPITSASAAQRRGRVGRNPNQ) form a disordered region. Residues 2168 to 2172 (EELPD) are regulates the ATPase activity of NS3 helicase. A helical membrane pass occupies residues 2174 to 2194 (LETITLIVAITVMTGGFFLLM). The Lumenal portion of the chain corresponds to 2195–2199 (MQRKG). The helical intramembrane region spans 2200-2220 (IGKMGLGALVLTLATFFLWAA). Residue E2221 is a topological domain, lumenal. The helical transmembrane segment at 2222–2242 (VPGTKIAGTLLIALLLMVVLI) threads the bilayer. Topologically, residues 2243 to 2257 (PEPEKQRSQTDNQLA) are cytoplasmic. The helical transmembrane segment at 2258–2278 (VFLICVLTVVGVVAANEYGML) threads the bilayer. Residues 2279 to 2311 (EKTKADLKSMFGGKTQASGLTGLPSMALDLRPA) are Lumenal-facing. The segment at residues 2312 to 2332 (TAWALYGGSTVVLTPLLKHLI) is an intramembrane region (helical). Over 2333 to 2368 (TSEYVTTSLASINSQAGSLFVLPRGVPFTDLDLTVG) the chain is Lumenal. A helical transmembrane segment spans residues 2369-2389 (LVFLGCWGQITLTTFLTAMVL). Residues 2390 to 2444 (ATLHYGYMLPGWQAEALRAAQRRTAAGIMKNAVVDGMVATDVPELERTTPLMQKK) are Cytoplasmic-facing. Residues 2445 to 2465 (VGQVLLIGVSVAAFLVNPNVT) form a helical membrane-spanning segment. Topologically, residues 2466 to 2469 (TVRE) are lumenal. The helical transmembrane segment at 2470-2490 (AGVLVTAATLTLWDNGASAVW) threads the bilayer. Residues 2491–3432 (NSTTATGLCH…DVLIQEDRVI (942 aa)) are Cytoplasmic-facing. The region spanning 2528–2793 (GRPGGRTLGE…DVNLGSGTRA (266 aa)) is the mRNA cap 0-1 NS5-type MT domain. S2583 contacts S-adenosyl-L-methionine. S2583 bears the Phosphoserine mark. The active-site For 2'-O-MTase activity is K2588. Positions 2613, 2614, 2631, 2632, 2658, and 2659 each coordinate S-adenosyl-L-methionine. Residue D2673 is the For 2'-O-MTase activity of the active site. Residue I2674 participates in S-adenosyl-L-methionine binding. Active-site for 2'-O-MTase activity residues include K2709 and E2745. Residue Y2747 participates in S-adenosyl-L-methionine binding. Zn(2+) is bound by residues E2967, H2971, C2976, and C2979. One can recognise a RdRp catalytic domain in the interval 3057–3209 (GKMYADDTAG…KPLDDRFATA (153 aa)). H3244, C3260, and C3379 together coordinate Zn(2+).

The protein in the N-terminal section; belongs to the class I-like SAM-binding methyltransferase superfamily. mRNA cap 0-1 NS5-type methyltransferase family. As to quaternary structure, homodimer. Interacts (via N-terminus) with host EXOC1 (via C-terminus); this interaction results in EXOC1 degradation through the proteasome degradation pathway. In terms of assembly, forms heterodimers with envelope protein E in the endoplasmic reticulum and Golgi. Homodimer; in the endoplasmic reticulum and Golgi. Interacts with protein prM. Interacts with non-structural protein 1. Interacts with host HSPA5. As to quaternary structure, homodimer; Homohexamer when secreted. Interacts with envelope protein E. NS1 interacts with NS4B. Interacts with host complement protein CFH; this interaction leads to the degradation of C3. In terms of assembly, interacts (via N-terminus) with serine protease NS3. Forms a heterodimer with serine protease NS3. May form homooligomers. Interacts with human SPCS1. As to quaternary structure, forms a heterodimer with NS2B. Interacts with non-structural protein 2A (via N-terminus). Interacts with NS4B. Interacts with unphosphorylated RNA-directed RNA polymerase NS5; this interaction stimulates RNA-directed RNA polymerase NS5 guanylyltransferase activity. Interacts with host ILF2. In terms of assembly, interacts with serine protease NS3. Homodimer. Interacts with host STAT2; this interaction inhibits the phosphorylation of the latter, and, when all viral proteins are present (polyprotein), targets STAT2 for degradation. Interacts with serine protease NS3. Mn(2+) is required as a cofactor. Requires Mg(2+) as cofactor. In terms of processing, specific enzymatic cleavages in vivo yield mature proteins. Cleavages in the lumen of endoplasmic reticulum are performed by host signal peptidase, whereas cleavages in the cytoplasmic side are performed by serine protease NS3. Signal cleavage at the 2K-4B site requires a prior NS3 protease-mediated cleavage at the 4A-2K site. Post-translationally, cleaved in post-Golgi vesicles by a host furin, releasing the mature small envelope protein M, and peptide pr. This cleavage is incomplete as up to 30% of viral particles still carry uncleaved prM. N-glycosylated. In terms of processing, N-glycosylated. The excreted form is glycosylated and this is required for efficient secretion of the protein from infected cells. Post-translationally, acetylated by host KAT5. Acetylation modulates NS3 RNA-binding and unwinding activities and plays an important positive role for viral replication. Phosphorylated on serines residues. This phosphorylation may trigger NS5 nuclear localization.

It localises to the host endoplasmic reticulum membrane. It is found in the virion. The protein localises to the host nucleus. Its subcellular location is the host cytoplasm. The protein resides in the host perinuclear region. It localises to the secreted. It is found in the virion membrane. The protein localises to the host cell surface. The enzyme catalyses Selective hydrolysis of -Xaa-Xaa-|-Yaa- bonds in which each of the Xaa can be either Arg or Lys and Yaa can be either Ser or Ala.. It catalyses the reaction RNA(n) + a ribonucleoside 5'-triphosphate = RNA(n+1) + diphosphate. It carries out the reaction a ribonucleoside 5'-triphosphate + H2O = a ribonucleoside 5'-diphosphate + phosphate + H(+). The catalysed reaction is ATP + H2O = ADP + phosphate + H(+). The enzyme catalyses a 5'-end (5'-triphosphoguanosine)-ribonucleoside in mRNA + S-adenosyl-L-methionine = a 5'-end (N(7)-methyl 5'-triphosphoguanosine)-ribonucleoside in mRNA + S-adenosyl-L-homocysteine. It catalyses the reaction a 5'-end (N(7)-methyl 5'-triphosphoguanosine)-ribonucleoside in mRNA + S-adenosyl-L-methionine = a 5'-end (N(7)-methyl 5'-triphosphoguanosine)-(2'-O-methyl-ribonucleoside) in mRNA + S-adenosyl-L-homocysteine + H(+). Its function is as follows. Plays a role in virus budding by binding to the cell membrane and gathering the viral RNA into a nucleocapsid that forms the core of a mature virus particle. During virus entry, may induce genome penetration into the host cytoplasm after hemifusion induced by the surface proteins. Can migrate to the cell nucleus where it modulates host functions. Overcomes the anti-viral effects of host EXOC1 by sequestering and degrading the latter through the proteasome degradation pathway. In terms of biological role, inhibits RNA silencing by interfering with host Dicer. Functionally, prevents premature fusion activity of envelope proteins in trans-Golgi by binding to envelope protein E at pH 6.0. After virion release in extracellular space, gets dissociated from E dimers. Acts as a chaperone for envelope protein E during intracellular virion assembly by masking and inactivating envelope protein E fusion peptide. prM is the only viral peptide matured by host furin in the trans-Golgi network probably to avoid catastrophic activation of the viral fusion activity in acidic Golgi compartment prior to virion release. prM-E cleavage is inefficient, and many virions are only partially matured. These uncleaved prM would play a role in immune evasion. Its function is as follows. May play a role in virus budding. Exerts cytotoxic effects by activating a mitochondrial apoptotic pathway through M ectodomain. May display a viroporin activity. In terms of biological role, binds to host cell surface receptor and mediates fusion between viral and cellular membranes. Efficient virus attachment to cell is, at least in part, mediated by host HSPA5. Envelope protein is synthesized in the endoplasmic reticulum in the form of heterodimer with protein prM. They play a role in virion budding in the ER, and the newly formed immature particle is covered with 60 spikes composed of heterodimer between precursor prM and envelope protein E. The virion is transported to the Golgi apparatus where the low pH causes dissociation of PrM-E heterodimers and formation of E homodimers. prM-E cleavage is inefficient, and many virions are only partially matured. These uncleaved prM would play a role in immune evasion. Functionally, involved in immune evasion, pathogenesis and viral replication. Once cleaved off the polyprotein, is targeted to three destinations: the viral replication cycle, the plasma membrane and the extracellular compartment. Essential for viral replication. Required for formation of the replication complex and recruitment of other non-structural proteins to the ER-derived membrane structures. Excreted as a hexameric lipoparticle that plays a role against host immune response. Antagonizing the complement function. Binds to the host macrophages and dendritic cells. Inhibits signal transduction originating from Toll-like receptor 3 (TLR3). Component of the viral RNA replication complex that functions in virion assembly and antagonizes the host alpha/beta interferon antiviral response. Its function is as follows. Required cofactor for the serine protease function of NS3. May have membrane-destabilizing activity and form viroporins. In terms of biological role, displays three enzymatic activities: serine protease, NTPase and RNA helicase. NS3 serine protease, in association with NS2B, performs its autocleavage and cleaves the polyprotein at dibasic sites in the cytoplasm: C-prM, NS2A-NS2B, NS2B-NS3, NS3-NS4A, NS4A-2K and NS4B-NS5. NS3 RNA helicase binds RNA and unwinds dsRNA in the 3' to 5' direction. Functionally, regulates the ATPase activity of the NS3 helicase activity. NS4A allows NS3 helicase to conserve energy during unwinding. Functions as a signal peptide for NS4B and is required for the interferon antagonism activity of the latter. Its function is as follows. Induces the formation of ER-derived membrane vesicles where the viral replication takes place. Inhibits interferon (IFN)-induced host STAT1 phosphorylation and nuclear translocation, thereby preventing the establishment of cellular antiviral state by blocking the IFN-alpha/beta pathway. Inhibits STAT2 translocation in the nucleus after IFN-alpha treatment. In terms of biological role, replicates the viral (+) and (-) RNA genome. Performs the capping of genomes in the cytoplasm. NS5 methylates viral RNA cap at guanine N-7 and ribose 2'-O positions. Besides its role in RNA genome replication, also prevents the establishment of cellular antiviral state by blocking the interferon-alpha/beta (IFN-alpha/beta) signaling pathway. Inhibits host TYK2 and STAT2 phosphorylation, thereby preventing activation of JAK-STAT signaling pathway. The sequence is that of Genome polyprotein from Japanese encephalitis virus (strain SA-14) (JEV).